Here is a 396-residue protein sequence, read N- to C-terminus: Purine ribonucleoside efflux pump NepI (396 aa).

Over 1-21 (MSEFIAENRGADAITRPNWSA) the chain is Cytoplasmic. A helical transmembrane segment spans residues 22-42 (VFSVAFCVACLIIVEFLPVSL). The Periplasmic portion of the chain corresponds to 43–54 (LTPMAQDLGISE). A helical transmembrane segment spans residues 55–75 (GVAGQSVTVTAFVAMFASLFI). The Cytoplasmic portion of the chain corresponds to 76–85 (TQTIQATDRR). A helical membrane pass occupies residues 86-106 (YVVILFAVLLTLSCLLVSFAN). Serine 107 is a topological domain (periplasmic). Residues 108 to 128 (FSLLLIGRACLGLALGGFWAM) traverse the membrane as a helical segment. Topologically, residues 129–147 (SASLTMRLVPPRTVPKALS) are cytoplasmic. The helical transmembrane segment at 148 to 168 (VIFGAVSIALVIAAPLGCFLG) threads the bilayer. The Periplasmic portion of the chain corresponds to 169-175 (ELIGWRN). A helical transmembrane segment spans residues 176–196 (VFNAAAAMGVLCIFWIIKSLP). Residues 197 to 215 (SLPGEPSHQKQNTFRLLQR) are Cytoplasmic-facing. The chain crosses the membrane as a helical span at residues 216–236 (PGVMAGMIAIFMSFAGQFAFF). Topologically, residues 237–255 (TYIRPVYMTLAGFGVDGLT) are periplasmic. Residues 256–276 (LVLLSFGIASFVGTSLSSFIL) form a helical membrane-spanning segment. The Cytoplasmic segment spans residues 277–281 (KRSVK). Residues 282 to 302 (LALAGAPFVLALSALVLTLWG) form a helical membrane-spanning segment. At 303-305 (SDK) the chain is on the periplasmic side. Residues 306-326 (IVATGVAIIWGLTFALIPVGW) traverse the membrane as a helical segment. Residues 327–343 (STWITRSLADQAEKAGS) are Cytoplasmic-facing. Residues 344–364 (IQVAVIQLANTCGAAIGGYAL) form a helical membrane-spanning segment. Residues 365–366 (DN) lie on the Periplasmic side of the membrane. Residues 367–387 (IGLTSPLMLSGTLMLLTALLV) form a helical membrane-spanning segment. Residues 388–396 (TAKVKMKKS) lie on the Cytoplasmic side of the membrane.

This sequence belongs to the major facilitator superfamily. DHA1 family. NepI (TC 2.A.1.2.26) subfamily.

It is found in the cell inner membrane. The catalysed reaction is inosine(in) + H(+)(out) = inosine(out) + H(+)(in). The enzyme catalyses guanosine(in) + H(+)(out) = guanosine(out) + H(+)(in). Functionally, involved in the efflux of purine ribonucleosides, such as inosine and guanosine. This Escherichia coli O157:H7 protein is Purine ribonucleoside efflux pump NepI.